The primary structure comprises 352 residues: MLTLSDFDFDLPPELIAQVALPERSASRLLEVDNPAGATGPARLIDRRFAELPDCIAAGDLLVFNDTKVLKARFLGQKASGGKIEVLVERLTGERTALAQIRASKSPQPGTTIRLADAFDVTVGERVEPFYTLHFPADCLTLIEQFGRLPLPPYIEHDPDATDETRYQTVFAQNPGAVAAPTAGLHFDEALLARLDAAGVERATLTLHVGAGTFQPVRVENLAEHKMHSEWYHLPQSLADKIAATRARGNRVIAVGTTSMRALEAAARDAEAAGRPLAAASTETDIFITPGYRFRVVDRLVTNFHLPKSTLLMLVSAFAGVETIREAYRHAIEARYRFFSYGDAMLLTRRDA.

Belongs to the QueA family. Monomer.

It is found in the cytoplasm. The catalysed reaction is 7-aminomethyl-7-carbaguanosine(34) in tRNA + S-adenosyl-L-methionine = epoxyqueuosine(34) in tRNA + adenine + L-methionine + 2 H(+). It participates in tRNA modification; tRNA-queuosine biosynthesis. In terms of biological role, transfers and isomerizes the ribose moiety from AdoMet to the 7-aminomethyl group of 7-deazaguanine (preQ1-tRNA) to give epoxyqueuosine (oQ-tRNA). The chain is S-adenosylmethionine:tRNA ribosyltransferase-isomerase from Paraburkholderia xenovorans (strain LB400).